We begin with the raw amino-acid sequence, 233 residues long: Nickel import system ATP-binding protein NikE (233 aa).

Positions 2-228 constitute an ABC transporter domain; that stretch reads IELKHVTFGY…DRHPYTKELV (227 aa). 35–42 is an ATP binding site; sequence GESGCGKS.

It belongs to the ABC transporter superfamily. The complex is composed of two ATP-binding proteins (NikD and NikE), two transmembrane proteins (NikB and NikC) and a solute-binding protein (NikA).

The protein resides in the cell membrane. The catalysed reaction is Ni(2+)(out) + ATP + H2O = Ni(2+)(in) + ADP + phosphate + H(+). Its function is as follows. Part of the ABC transporter complex NikABCDE (Opp2) involved in nickel import. Probably responsible for energy coupling to the transport system. In Staphylococcus aureus (strain Mu50 / ATCC 700699), this protein is Nickel import system ATP-binding protein NikE.